The chain runs to 317 residues: Glycine--tRNA ligase alpha subunit (317 aa).

This sequence belongs to the class-II aminoacyl-tRNA synthetase family. Tetramer of two alpha and two beta subunits.

Its subcellular location is the cytoplasm. It carries out the reaction tRNA(Gly) + glycine + ATP = glycyl-tRNA(Gly) + AMP + diphosphate. This chain is Glycine--tRNA ligase alpha subunit, found in Acidovorax ebreus (strain TPSY) (Diaphorobacter sp. (strain TPSY)).